The following is a 344-amino-acid chain: Cinnamoyl-CoA reductase 1 (344 aa).

Position 7 is a phosphoserine (serine 7). NADP(+) contacts are provided by residues 17–23, arginine 42, lysine 48, 68–69, 88–90, tyrosine 161, lysine 165, 188–191, and serine 203; these read GAGGYIA, DL, TAS, and PVLV. Cysteine 154 and cysteine 162 are joined by a disulfide. Lysine 165 serves as the catalytic Proton donor. The tract at residues 317–344 is disordered; that stretch reads QEKGHLAPPPPPPSASQESVENGIKIGS.

The protein belongs to the NAD(P)-dependent epimerase/dehydratase family. Dihydroflavonol-4-reductase subfamily. In terms of tissue distribution, expressed in leaves, stems and flowers.

The enzyme catalyses (E)-cinnamaldehyde + NADP(+) + CoA = (E)-cinnamoyl-CoA + NADPH + H(+). It functions in the pathway aromatic compound metabolism; phenylpropanoid biosynthesis. Functionally, involved in the latter stages of lignin biosynthesis. Catalyzes one of the last steps of monolignol biosynthesis, the conversion of cinnamoyl-CoAs into their corresponding cinnamaldehydes. This is Cinnamoyl-CoA reductase 1 from Arabidopsis thaliana (Mouse-ear cress).